A 352-amino-acid chain; its full sequence is SNF1-related protein kinase regulatory subunit gamma-like PV42a (352 aa).

4 consecutive CBS domains span residues 24–106 (RNRR…LSDL), 122–196 (LEGL…FDDL), 210–281 (VNDS…ELQT), and 297–352 (KERE…STLS).

Belongs to the 5'-AMP-activated protein kinase gamma subunit family. Expressed highly in rosette leaves, cauline leaves, open flowers, developing siliques and dry seeds, but at a low level in stems and floral buds.

In terms of biological role, plays redundant role with PV42b in regulating male gametogenesis and pollen tube guidance. This is SNF1-related protein kinase regulatory subunit gamma-like PV42a (PV42A) from Arabidopsis thaliana (Mouse-ear cress).